The primary structure comprises 523 residues: MNRNEISFIYYVKIKLYLYNSFFIMSYIEMVLAIPLLGAIALLFVPSWKTQTIRNIALNSSLLTFLISLLLWIEFDSSSALFQFTDGVCSPNVYSDVTLAKAASSSSFSALNFALGVDGISLFFIILTTLLVPICILVSWNNIEVYVKEYCIAFLVLETLMLTVFSVLDLLLFYIFFESVLIPMFIIIGVWGSRERKIRAAYQFFLYTLFGSVLMLLAILLIYFQTGTLDIEMLYLSDFSETRQCILWLAFFASFAVKVPMVPVHIWLPEAHVEAPTAGSVILAGILLKLGTYGFLRFSIPLFPYACIYFTPLIYTMSVIAIVYTSCTTIRQIDLKKIIAYSSVAHMNFVTIGLFSQNTQGIEGSILLMISHGLVSPALFLCVGVLYDRHKTRLLRYYSGCGQTMPIFALLFVFFTMANISLPGTSSFPGEFLVFIGSYQNNSFVAFCAATGMVLGAAYALWLCNRLIYGVSKPDFINTWSDVNRREFFMFAPLIAGILWIGVYPEPFLDAMHCSCIYLLYAQ.

14 helical membrane-spanning segments follow: residues 22-42 (FFIM…AIAL), 62-82 (LLTF…SALF), 120-140 (ISLF…LVSW), 149-169 (EYCI…SVLD), 170-190 (LLLF…IIGV), 204-224 (FFLY…LIYF), 246-266 (ILWL…PVHI), 276-296 (PTAG…YGFL), 303-323 (FPYA…IAIV), 338-358 (IIAY…FSQN), 366-386 (ILLM…VGVL), 404-424 (TMPI…SLPG), 444-464 (FVAF…LWLC), and 488-508 (FFMF…PEPF).

The protein belongs to the complex I subunit 4 family.

The protein resides in the mitochondrion membrane. The catalysed reaction is a ubiquinone + NADH + 5 H(+)(in) = a ubiquinol + NAD(+) + 4 H(+)(out). Functionally, core subunit of the mitochondrial membrane respiratory chain NADH dehydrogenase (Complex I) that is believed to belong to the minimal assembly required for catalysis. Complex I functions in the transfer of electrons from NADH to the respiratory chain. The immediate electron acceptor for the enzyme is believed to be ubiquinone. The protein is NADH-ubiquinone oxidoreductase chain 4 (ND4) of Prototheca wickerhamii.